The chain runs to 181 residues: CAPA peptides (181 aa).

The first 22 residues, 1–22, serve as a signal peptide directing secretion; that stretch reads MQDNRFFILMILLVFSTSLNQG. Positions 23-29 are excised as a propeptide; that stretch reads QKLKAND. Isoleucine 41 carries the post-translational modification Isoleucine amide. The propeptide occupies 44 to 54; sequence NSEISSFSRSE. Isoleucine 65 is subject to Isoleucine amide. A propeptide spanning residues 68-181 is cleaved from the precursor; sequence SDVSSFDNLN…ENERDTANFL (114 aa). The segment at 159 to 181 is disordered; sequence TQGQGGYTPRLGRENERDTANFL. A compositionally biased stretch (basic and acidic residues) spans 169-181; it reads LGRENERDTANFL.

A pyrokinin potentially constituted by residues Asn-158 to Gly-170 has so far not been detected and might be completely absent in ants. Periviscerokinin 1 and 2 are expressed in central brain, antennal lobes and gnathal, thoracic and abominal ganglia. Periviscerokinin 2 is also expressed in the retrocerebral complex (at protein level).

It is found in the secreted. Its function is as follows. Periviscerokinins mediate visceral muscle contractile activity (myotropic activity). This Camponotus floridanus (Florida carpenter ant) protein is CAPA peptides.